A 270-amino-acid chain; its full sequence is Probable inositol 1-monophosphatase ImpA (270 aa).

Glutamate 69, aspartate 85, isoleucine 87, and aspartate 88 together coordinate Mg(2+). A substrate-binding site is contributed by glutamate 69. Residues 87–90 (IDGT), arginine 187, and aspartate 216 contribute to the substrate site. Aspartate 216 contacts Mg(2+).

Belongs to the inositol monophosphatase superfamily. It depends on Mg(2+) as a cofactor.

The enzyme catalyses a myo-inositol phosphate + H2O = myo-inositol + phosphate. Its pathway is polyol metabolism; myo-inositol biosynthesis; myo-inositol from D-glucose 6-phosphate: step 2/2. In terms of biological role, catalyzes the dephosphorylation of inositol 1-phosphate (I-1-P) to yield free myo-inositol, a key metabolite in mycobacteria. The chain is Probable inositol 1-monophosphatase ImpA (impA) from Mycobacterium tuberculosis (strain ATCC 25618 / H37Rv).